A 453-amino-acid polypeptide reads, in one-letter code: Ribulose bisphosphate carboxylase large chain (453 aa).

Residues 1 to 2 (MS) constitute a propeptide that is removed on maturation. Position 3 is an N-acetylproline (Pro-3). Lys-14 is subject to N6,N6,N6-trimethyllysine. The substrate site is built by Asn-123 and Thr-173. Lys-175 (proton acceptor) is an active-site residue. Residue Lys-177 participates in substrate binding. Mg(2+) is bound by residues Lys-201, Asp-203, and Glu-204. Lys-201 is modified (N6-carboxylysine). The active-site Proton acceptor is His-294. Residues Arg-295, His-327, and Ser-379 each coordinate substrate.

This sequence belongs to the RuBisCO large chain family. Type I subfamily. In terms of assembly, heterohexadecamer of 8 large chains and 8 small chains; disulfide-linked. The disulfide link is formed within the large subunit homodimers. Requires Mg(2+) as cofactor. Post-translationally, the disulfide bond which can form in the large chain dimeric partners within the hexadecamer appears to be associated with oxidative stress and protein turnover.

It is found in the plastid. The protein localises to the chloroplast. It catalyses the reaction 2 (2R)-3-phosphoglycerate + 2 H(+) = D-ribulose 1,5-bisphosphate + CO2 + H2O. The catalysed reaction is D-ribulose 1,5-bisphosphate + O2 = 2-phosphoglycolate + (2R)-3-phosphoglycerate + 2 H(+). Its function is as follows. RuBisCO catalyzes two reactions: the carboxylation of D-ribulose 1,5-bisphosphate, the primary event in carbon dioxide fixation, as well as the oxidative fragmentation of the pentose substrate in the photorespiration process. Both reactions occur simultaneously and in competition at the same active site. The chain is Ribulose bisphosphate carboxylase large chain from Galium lucidum.